Here is a 443-residue protein sequence, read N- to C-terminus: Nuclear distribution protein nudF (443 aa).

The LisH domain occupies 9–41; it reads QAEELHKSIIAYLSSINASRSCEVLREELQVDS. A coiled-coil region spans residues 60–87; the sequence is TGIARLQKKILDLESKLAGLQTELDTIS. 8 WD repeats span residues 111 to 152, 154 to 194, 198 to 238, 241 to 280, 283 to 343, 345 to 384, 388 to 427, and 429 to 443; these read SHRD…RTLK, HMRP…ANVR, GHDH…CVKV, SQGS…SVAS, GHEN…IKTL, GHDN…RLVK, AHGH…PGFQ, and VIAT…RIFT.

This sequence belongs to the WD repeat LIS1/nudF family. In terms of assembly, self-associates. Interacts with nudE and dynein.

It localises to the cytoplasm. Its subcellular location is the cytoskeleton. It is found in the spindle pole. Positively regulates the activity of the minus-end directed microtubule motor protein dynein. May enhance dynein-mediated microtubule sliding by targeting dynein to the microtubule plus end. Required for nuclear migration during vegetative growth as well as development. Required for retrograde early endosome (EE) transport from the hyphal tip. Required for localization of dynein to the mitotic spindle poles. Recruits additional proteins to the dynein complex at SPBs. This chain is Nuclear distribution protein nudF, found in Aspergillus niger (strain ATCC MYA-4892 / CBS 513.88 / FGSC A1513).